The following is an 898-amino-acid chain: Endoplasmic reticulum metallopeptidase 1 (898 aa).

Met-1 bears the N-acetylmethionine mark. A disordered region spans residues 1 to 55 (MEWSSESAAVRRHRGTAERREGEAAASHRQREASAQEDAKGVGRMWGKTENGGGS). The Cytoplasmic portion of the chain corresponds to 1-66 (MEWSSESAAV…VAKTALSEAR (66 aa)). The segment covering 29–41 (RQREASAQEDAKG) has biased composition (basic and acidic residues). Residues 67–87 (TALALALYLLALRALVQLSLQ) traverse the membrane as a helical segment. Over 88–393 (RLVLSRTSGL…SSSEYRHGSM (306 aa)) the chain is Lumenal. N-linked (GlcNAc...) asparagine glycosylation occurs at Asn-176. Cys-198 and Cys-216 form a disulfide bridge. Zn(2+) contacts are provided by His-199 and Asp-211. The Proton acceptor role is filled by Glu-245. Positions 246, 272, and 348 each coordinate Zn(2+). The chain crosses the membrane as a helical span at residues 394 to 414 (VFFDVLGLLVIAYPSRVGSII). The Cytoplasmic segment spans residues 415 to 451 (NYMVVMAVVLYLGKKLLRPKHRNANYMRDFLCGLGIT). Residues 452–472 (FISWFTSLVTVLIIAVFISLI) traverse the membrane as a helical segment. Topologically, residues 473 to 480 (GQSLSWYN) are lumenal. A helical membrane pass occupies residues 481-501 (YFYIAVCLYGTATVAKIIFIH). Residues 502–515 (TLAKRFYYMNASDL) are Cytoplasmic-facing. The chain crosses the membrane as a helical span at residues 516–538 (YLGELFFDTSLFVHCAFLVALTY). Residues 539 to 542 (QGFC) are Lumenal-facing. Residues 543-562 (SAFMSAVWVVFPLLTKLCVY) form a helical membrane-spanning segment. The Cytoplasmic portion of the chain corresponds to 563–573 (KDFKKHGAQGR). The helical transmembrane segment at 574–594 (FVALYLLGMFIPYLYGLYLIW) threads the bilayer. At 595-615 (AVFEMFTPILGRSGSEIPPDV) the chain is on the lumenal side. Residues 616-636 (VLASILAVCVMILSSYFITFI) traverse the membrane as a helical segment. Residues 637–645 (YLVNSTKKT) are Cytoplasmic-facing. Residues 646–666 (ILTLILVCAVTFLLVCSGAFF) form a helical membrane-spanning segment. Topologically, residues 667–898 (PYSSNPESPK…WVSTYSLFVF (232 aa)) are lumenal. Asn-724 is a glycosylation site (N-linked (GlcNAc...) asparagine).

Belongs to the peptidase M28 family. Zn(2+) serves as cofactor.

The protein localises to the endoplasmic reticulum membrane. Within the ovary, required for the organization of somatic cells and oocytes into discrete follicular structures. In Mus musculus (Mouse), this protein is Endoplasmic reticulum metallopeptidase 1.